Here is a 187-residue protein sequence, read N- to C-terminus: CASP-like protein SELMODRAFT_416718 (187 aa).

The helical transmembrane segment at 1-21 (MMFGGVGMATLPLSLIFAFKN) threads the bilayer. Residues 22–100 (RPKCVITRAQ…EAFPQGEKAD (79 aa)) are Extracellular-facing. Residues 101-119 (TSWALTVLFYLAKLVFGIL) form a helical membrane-spanning segment. The Cytoplasmic portion of the chain corresponds to 120–125 (GLALSV). The helical transmembrane segment at 126 to 145 (IWLLHIIVFMLVNPPAFPFL) threads the bilayer. Topologically, residues 146 to 155 (NQVFIQLDSA) are extracellular. The helical transmembrane segment at 156 to 176 (WGLLGTTAFAIFCYYLVMSVI) threads the bilayer. Topologically, residues 177-187 (SGEMHSIYPMK) are cytoplasmic.

Belongs to the Casparian strip membrane proteins (CASP) family. Homodimer and heterodimers.

It localises to the cell membrane. This is CASP-like protein SELMODRAFT_416718 from Selaginella moellendorffii (Spikemoss).